Reading from the N-terminus, the 370-residue chain is UDP-3-O-acylglucosamine N-acyltransferase (370 aa).

H252 functions as the Proton acceptor in the catalytic mechanism. The tract at residues 348 to 370 is disordered; it reads NAAAEKRDGPAPNAASKATGDKV.

It belongs to the transferase hexapeptide repeat family. LpxD subfamily. In terms of assembly, homotrimer.

It catalyses the reaction a UDP-3-O-[(3R)-3-hydroxyacyl]-alpha-D-glucosamine + a (3R)-hydroxyacyl-[ACP] = a UDP-2-N,3-O-bis[(3R)-3-hydroxyacyl]-alpha-D-glucosamine + holo-[ACP] + H(+). It participates in bacterial outer membrane biogenesis; LPS lipid A biosynthesis. Functionally, catalyzes the N-acylation of UDP-3-O-acylglucosamine using 3-hydroxyacyl-ACP as the acyl donor. Is involved in the biosynthesis of lipid A, a phosphorylated glycolipid that anchors the lipopolysaccharide to the outer membrane of the cell. This is UDP-3-O-acylglucosamine N-acyltransferase from Paraburkholderia phytofirmans (strain DSM 17436 / LMG 22146 / PsJN) (Burkholderia phytofirmans).